The following is a 147-amino-acid chain: Cyanate hydratase (147 aa).

Catalysis depends on residues Arg-88, Glu-91, and Ser-114.

This sequence belongs to the cyanase family.

It catalyses the reaction cyanate + hydrogencarbonate + 3 H(+) = NH4(+) + 2 CO2. In terms of biological role, catalyzes the reaction of cyanate with bicarbonate to produce ammonia and carbon dioxide. The protein is Cyanate hydratase of Thiobacillus denitrificans (strain ATCC 25259 / T1).